A 5099-amino-acid chain; its full sequence is Malformin synthetase mlfA (5099 aa).

The interval 224-615 (QRHAADRPHS…CGRADTQVKL (392 aa)) is adenylation 1. Residues 756 to 829 (THLENEIQLA…EAASLAKVRD (74 aa)) enclose the Carrier 1 domain. Serine 790 carries the O-(pantetheine 4'-phosphoryl)serine modification. Positions 867-1297 (EDVFPCTSMQ…PVDSLTLLKP (431 aa)) are condensation 1. The adenylation 2 stretch occupies residues 1325 to 1717 (DRWVNRQPDT…GRKDTQVKLR (393 aa)). Residues 1857-1934 (ARAPELERTL…QIATQCEGIA (78 aa)) enclose the Carrier 2 domain. Serine 1894 carries the post-translational modification O-(pantetheine 4'-phosphoryl)serine. The segment at 1995-2040 (MQQESSSSPAPSVSSSSSSSSAPKPLLAQPEPPTNLRDSVPEPFSL) is disordered. The segment covering 1999-2017 (SSSSPAPSVSSSSSSSSAP) has biased composition (low complexity). Residues 2067–2482 (EDIYPATPLQ…ALSPGDKKVL (416 aa)) form a condensation 2 region. An adenylation 3 region spans residues 2505-2897 (LSTPHAPAVC…VGRKDGQLKL (393 aa)). The region spanning 3032 to 3108 (RPATAQERGL…RLVLHLQNTS (77 aa)) is the Carrier 3 domain. Serine 3069 is modified (O-(pantetheine 4'-phosphoryl)serine). Condensation stretches follow at residues 3125–3589 (WVHL…TYDQ) and 3610–4033 (DIYP…QQAM). Residues 4058–4446 (YANREAVCAW…VGRKDSQIKF (389 aa)) are adenylation 4. In terms of domain architecture, Carrier 4 spans 4581-4657 (PPSTGMQQGI…DLAEHISSRV (77 aa)). The residue at position 4618 (serine 4618) is an O-(pantetheine 4'-phosphoryl)serine. The segment at 4696 to 5017 (DILPTTGFQR…LQTVVQHQNV (322 aa)) is condensation 5.

This sequence belongs to the NRP synthetase family.

It participates in secondary metabolite biosynthesis. Its function is as follows. Nonribosomal peptide synthetase; part of the gene cluster that mediates the biosynthesis of malformins, cyclic pentapeptides with a disulfide bond between 2 consecutive cysteins, that show potential anti-tumor as well as antimalarial and antitrypanosomal properties. The nonribosomal peptide synthetase mlfA is responsible of the formation of the cyclic pentapeptide. The malformin biosynthesis clusters in malformin-producing fungi also contain enzymes involved in the formation of the disulfide bond between the two consecutive cysteins within malformins, in addition to additional tailoring enzymes such as methyltransferases or oxidoreductases. They are also composed of up to 4 major facilitator superfamily transporters, and transcription factors probably involved in the regulation of the expression of those clusters. The chain is Malformin synthetase mlfA from Aspergillus sclerotiicarbonarius (strain CBS 121057 / IBT 28362).